Here is an 85-residue protein sequence, read N- to C-terminus: Translational regulator CsrA (85 aa).

It belongs to the CsrA/RsmA family. Homodimer; the beta-strands of each monomer intercalate to form a hydrophobic core, while the alpha-helices form wings that extend away from the core.

Its subcellular location is the cytoplasm. Functionally, a translational regulator that binds mRNA to regulate translation initiation and/or mRNA stability. Usually binds in the 5'-UTR at or near the Shine-Dalgarno sequence preventing ribosome-binding, thus repressing translation. Its main target seems to be the major flagellin gene, while its function is anatagonized by FliW. The sequence is that of Translational regulator CsrA from Leifsonia xyli subsp. xyli (strain CTCB07).